The following is a 121-amino-acid chain: Anther-specific protein SF2 (121 aa).

The N-terminal stretch at 1–21 (MANNSVSYLVLLLLVFVLAIS) is a signal peptide. Asparagine 115 carries an N-linked (GlcNAc...) asparagine glycan.

As to expression, epidermal anther cells.

Its subcellular location is the secreted. The protein localises to the cell wall. Anther-specific cell wall protein which could contribute to the cell wall architecture of epidermal anther cells via intermolecular disulfide bridges. This is Anther-specific protein SF2 from Helianthus annuus (Common sunflower).